Here is a 198-residue protein sequence, read N- to C-terminus: MSNVRVSNGSPTSERRDAKQAEYPKPSACRNLFGPVNHEELTRDLEKHCIDMEEASQNKWNFDFQNHKPLEGKYEWQEVEKGSLPEFYYRPPRPPKGACKVPAQESQDVSGTRQAGPLLGSQANSEDTHLVDQKTDAPDSQTGLAEQCTGIRKRPATDDSSPQNKRANRTEENVSDGSPNAGSVEQTPKKPGLRRRQT.

Residues 1–12 show a composition bias toward polar residues; that stretch reads MSNVRVSNGSPT. The segment at 1–30 is disordered; it reads MSNVRVSNGSPTSERRDAKQAEYPKPSACR. Ser-10 carries the phosphoserine; by UHMK1 modification. Over residues 13-22 the composition is skewed to basic and acidic residues; the sequence is SERRDAKQAE. The tract at residues 51–91 is interaction with CDK2; that stretch reads DMEEASQNKWNFDFQNHKPLEGKYEWQEVEKGSLPEFYYRP. Tyr-74 is modified (phosphotyrosine; by SRC). A disordered region spans residues 87–198; sequence FYYRPPRPPK…KKPGLRRRQT (112 aa). Position 88 is a phosphotyrosine; by ABL, LYN and SRC (Tyr-88). Tyr-89 is subject to Phosphotyrosine. Over residues 104-113 the composition is skewed to polar residues; sequence QESQDVSGTR. A compositionally biased stretch (basic and acidic residues) spans 126-137; it reads EDTHLVDQKTDA. Residues 153–169 carry the Nuclear localization signal motif; the sequence is KRPATDDSSPQNKRANR. Residue Thr-157 is modified to Phosphothreonine; by CaMK1, PKB/AKT1 and PIM1. The residue at position 170 (Thr-170) is a Phosphothreonine. Positions 175-186 are enriched in polar residues; the sequence is SDGSPNAGSVEQ. Thr-187 carries the post-translational modification Phosphothreonine; by PKB/AKT1, CDK1 and CDK2. Phosphothreonine; by CaMK1, PKB/AKT1, RPS6KA1, RPS6KA3 and PIM1 is present on Thr-198.

Belongs to the CDI family. In terms of assembly, forms a ternary complex composed of CCNE1, CDK2 and CDKN1B. Interacts directly with CCNE1; the interaction is inhibited by CDK2-dependent phosphorylation on Thr-187. Interacts with COPS5, subunit of the COP9 signalosome complex; the interaction leads to CDKN1B degradation. Interacts with NUP50; the interaction leads to nuclear import and degradation of phosphorylated CDKN1B. Interacts with CCND1 and SNX6. Interacts (Thr-198-phosphorylated form) with 14-3-3 proteins, binds strongly YWHAQ, weakly YWHAE and YWHAH, but not YWHAB nor YWHAZ; the interaction with YWHAQ results in translocation to the cytoplasm. Interacts with AKT1 and LYN; the interactions lead to cytoplasmic mislocation, phosphorylation of CDKN1B and inhibition of cell cycle arrest. Forms a ternary complex with CCNA2 and CDK2; CDKN1B inhibits the kinase activity of CDK2 through conformational rearrangements. Interacts (unphosphorylated form) with CDK2. Forms a complex with CDK2 and SPDYA, but does not directly interact with SPDYA. Forms a ternary complex composed of cyclin D, CDK4 and CDKN1B. Interacts (phosphorylated on Tyr-88 and Tyr-89) with CDK4; the interaction is required for cyclin D and CDK4 complex assembly, induces nuclear translocation and activates the CDK4 kinase activity. Interacts with GRB2. Interacts with PIM1. Identified in a complex with SKP1, SKP2 and CKS1B. Interacts with UHMK1; the interaction leads to cytoplasmic mislocation, phosphorylation of CDKN1B and inhibition of cell cycle arrest. Also interacts with CDK1. Dephosphorylated on Thr-187 by PPM1H, leading to CDKN1B stability. In terms of processing, phosphorylated; phosphorylation occurs on serine, threonine and tyrosine residues. Phosphorylation on Ser-10 is the major site of phosphorylation in resting cells, takes place at the G(0)-G(1) phase and leads to protein stability. Phosphorylation on other sites is greatly enhanced by mitogens, growth factors, cMYC and in certain cancer cell lines. The phosphorylated form found in the cytoplasm is inactivate. Phosphorylation on Thr-198 is required for interaction with 14-3-3 proteins. Phosphorylation on Thr-187, by CDK1 and CDK2 leads to protein ubiquitination and proteasomal degradation. Tyrosine phosphorylation promotes this process. Phosphorylation by PKB/AKT1 can be suppressed by LY294002, an inhibitor of the catalytic subunit of PI3K. Phosphorylation on Tyr-88 and Tyr-89 has no effect on binding CDK2, but is required for binding CDK4. Dephosphorylated on tyrosine residues by G-CSF. Dephosphorylated on Thr-187 by PPM1H, leading to CDKN1B stability. Post-translationally, ubiquitinated; in the cytoplasm by the KPC complex (composed of RNF123/KPC1 and UBAC1/KPC2) and, in the nucleus, by SCF(SKP2). The latter requires prior phosphorylation on Thr-187. Ubiquitinated; by a TRIM21-containing SCF(SKP2)-like complex; leads to its degradation. Subject to degradation in the lysosome. Interaction with SNX6 promotes lysosomal degradation.

The protein localises to the nucleus. It is found in the cytoplasm. It localises to the endosome. In terms of biological role, important regulator of cell cycle progression. Inhibits the kinase activity of CDK2 bound to cyclin A, but has little inhibitory activity on CDK2 bound to SPDYA. Involved in G1 arrest. Potent inhibitor of cyclin E- and cyclin A-CDK2 complexes. Forms a complex with cyclin type D-CDK4 complexes and is involved in the assembly, stability, and modulation of CCND1-CDK4 complex activation. Acts either as an inhibitor or an activator of cyclin type D-CDK4 complexes depending on its phosphorylation state and/or stoichometry. This chain is Cyclin-dependent kinase inhibitor 1B (CDKN1B), found in Canis lupus familiaris (Dog).